Here is an 82-residue protein sequence, read N- to C-terminus: Small ribosomal subunit protein bS18 (82 aa).

The tract at residues 1–21 is disordered; sequence MKRNNSKKVRVEPTRRPKKNP.

This sequence belongs to the bacterial ribosomal protein bS18 family. As to quaternary structure, part of the 30S ribosomal subunit. Forms a tight heterodimer with protein bS6.

Binds as a heterodimer with protein bS6 to the central domain of the 16S rRNA, where it helps stabilize the platform of the 30S subunit. This Corynebacterium kroppenstedtii (strain DSM 44385 / JCM 11950 / CIP 105744 / CCUG 35717) protein is Small ribosomal subunit protein bS18.